An 819-amino-acid polypeptide reads, in one-letter code: Ribosome-releasing factor 2, mitochondrial (819 aa).

The N-terminal 30 residues, 1 to 30 (MWKWNVRRWAGARVNISKNRLSVINVGSRY), are a transit peptide targeting the mitochondrion. The tr-type G domain maps to 39 to 327 (SKVRNIGIIA…AIVNYLPSPI (289 aa)). Residues 48 to 55 (AHIDAGKT), 113 to 117 (DTPGH), and 165 to 168 (NKMD) each bind GTP.

The protein belongs to the TRAFAC class translation factor GTPase superfamily. Classic translation factor GTPase family. EF-G/EF-2 subfamily.

It is found in the mitochondrion. In terms of biological role, mitochondrial GTPase that mediates the disassembly of ribosomes from messenger RNA at the termination of mitochondrial protein biosynthesis. Not involved in the GTP-dependent ribosomal translocation step during translation elongation. This chain is Ribosome-releasing factor 2, mitochondrial, found in Saccharomyces cerevisiae (strain RM11-1a) (Baker's yeast).